The following is a 207-amino-acid chain: High frequency lysogenization protein HflD homolog (207 aa).

The protein belongs to the HflD family.

Its subcellular location is the cytoplasm. It is found in the cell inner membrane. This is High frequency lysogenization protein HflD homolog from Pseudomonas fluorescens (strain ATCC BAA-477 / NRRL B-23932 / Pf-5).